We begin with the raw amino-acid sequence, 150 residues long: UPF0178 protein Daro_2879 (150 aa).

This sequence belongs to the UPF0178 family.

This Dechloromonas aromatica (strain RCB) protein is UPF0178 protein Daro_2879.